Here is a 301-residue protein sequence, read N- to C-terminus: Ornithine carbamoyltransferase (301 aa).

Carbamoyl phosphate contacts are provided by residues R100 and 127 to 130 (HPCQ). L-ornithine-binding positions include N158, D221, and 225 to 226 (SM). Residues 260–261 (CL) and R288 contribute to the carbamoyl phosphate site.

It belongs to the aspartate/ornithine carbamoyltransferase superfamily. OTCase family.

The protein localises to the cytoplasm. The catalysed reaction is carbamoyl phosphate + L-ornithine = L-citrulline + phosphate + H(+). The protein operates within amino-acid biosynthesis; L-arginine biosynthesis; L-arginine from L-ornithine and carbamoyl phosphate: step 1/3. Reversibly catalyzes the transfer of the carbamoyl group from carbamoyl phosphate (CP) to the N(epsilon) atom of ornithine (ORN) to produce L-citrulline. The protein is Ornithine carbamoyltransferase of Shewanella oneidensis (strain ATCC 700550 / JCM 31522 / CIP 106686 / LMG 19005 / NCIMB 14063 / MR-1).